The sequence spans 147 residues: Hemoglobin subunit beta (147 aa).

The residue at position 2 (Val-2) is an N-acetylvaline. A Globin domain is found at 3–147; that stretch reads NLTSDEKTAV…VANALAHKYH (145 aa). The residue at position 45 (Ser-45) is a Phosphoserine. Residue Lys-60 is modified to N6-acetyllysine. Position 64 (His-64) interacts with heme b. At Lys-83 the chain carries N6-acetyllysine. His-93 is a heme b binding site. An S-nitrosocysteine modification is found at Cys-94. Lys-145 is modified (N6-acetyllysine).

It belongs to the globin family. As to quaternary structure, heterotetramer of two alpha chains and two beta chains. As to expression, red blood cells.

In terms of biological role, involved in oxygen transport from the lung to the various peripheral tissues. This is Hemoglobin subunit beta (HBB) from Dasypus novemcinctus (Nine-banded armadillo).